The chain runs to 228 residues: Endo-1,4-beta-xylanase A (228 aa).

An N-terminal signal peptide occupies residues 1-27 (MNLRKLRLLFVMCIGLTLILTAVPAHA). A GH11 domain is found at 29-222 (TITNNEMGNH…SSGSANVMTN (194 aa)). Glu-120 (nucleophile) is an active-site residue. Glu-209 (proton donor) is an active-site residue.

Belongs to the glycosyl hydrolase 11 (cellulase G) family.

The enzyme catalyses Endohydrolysis of (1-&gt;4)-beta-D-xylosidic linkages in xylans.. It functions in the pathway glycan degradation; xylan degradation. The sequence is that of Endo-1,4-beta-xylanase A (xynA) from Bacillus pumilus (Bacillus mesentericus).